Here is a 154-residue protein sequence, read N- to C-terminus: SsrA-binding protein (154 aa).

The segment at 134-154 is disordered; that stretch reads QREDLKRRAEDRDTQRELARF.

Belongs to the SmpB family.

The protein localises to the cytoplasm. Required for rescue of stalled ribosomes mediated by trans-translation. Binds to transfer-messenger RNA (tmRNA), required for stable association of tmRNA with ribosomes. tmRNA and SmpB together mimic tRNA shape, replacing the anticodon stem-loop with SmpB. tmRNA is encoded by the ssrA gene; the 2 termini fold to resemble tRNA(Ala) and it encodes a 'tag peptide', a short internal open reading frame. During trans-translation Ala-aminoacylated tmRNA acts like a tRNA, entering the A-site of stalled ribosomes, displacing the stalled mRNA. The ribosome then switches to translate the ORF on the tmRNA; the nascent peptide is terminated with the 'tag peptide' encoded by the tmRNA and targeted for degradation. The ribosome is freed to recommence translation, which seems to be the essential function of trans-translation. This Nitratidesulfovibrio vulgaris (strain ATCC 29579 / DSM 644 / CCUG 34227 / NCIMB 8303 / VKM B-1760 / Hildenborough) (Desulfovibrio vulgaris) protein is SsrA-binding protein.